A 235-amino-acid chain; its full sequence is 2-C-methyl-D-erythritol 4-phosphate cytidylyltransferase (235 aa).

It belongs to the IspD/TarI cytidylyltransferase family. IspD subfamily.

It carries out the reaction 2-C-methyl-D-erythritol 4-phosphate + CTP + H(+) = 4-CDP-2-C-methyl-D-erythritol + diphosphate. Its pathway is isoprenoid biosynthesis; isopentenyl diphosphate biosynthesis via DXP pathway; isopentenyl diphosphate from 1-deoxy-D-xylulose 5-phosphate: step 2/6. In terms of biological role, catalyzes the formation of 4-diphosphocytidyl-2-C-methyl-D-erythritol from CTP and 2-C-methyl-D-erythritol 4-phosphate (MEP). In Pseudomonas fluorescens (strain Pf0-1), this protein is 2-C-methyl-D-erythritol 4-phosphate cytidylyltransferase.